The following is a 128-amino-acid chain: MRFAIVVTGPAYGTQQASSAFQFAQALIAEGHKLSSVFFYREGVYNANHLTSPASDEFDLVRGWQQLNAQHGVALNICVAAALRRGVVDEMEAGRLGLASSNLQQGFTLSGLGALAEASLTCDRVVQF.

The active-site Cysteine persulfide intermediate is Cys-78.

This sequence belongs to the DsrE/TusD family. As to quaternary structure, heterohexamer, formed by a dimer of trimers. The hexameric TusBCD complex contains 2 copies each of TusB, TusC and TusD. The TusBCD complex interacts with TusE.

It localises to the cytoplasm. Part of a sulfur-relay system required for 2-thiolation of 5-methylaminomethyl-2-thiouridine (mnm(5)s(2)U) at tRNA wobble positions. Accepts sulfur from TusA and transfers it in turn to TusE. The polypeptide is Sulfurtransferase TusD (Escherichia coli O157:H7).